A 313-amino-acid chain; its full sequence is tRNA dimethylallyltransferase (313 aa).

An ATP-binding site is contributed by 11–18 (GPTASGKT). 13–18 (TASGKT) is a substrate binding site. Interaction with substrate tRNA stretches follow at residues 36 to 39 (DSAL), 160 to 164 (QRINR), and 241 to 246 (RCVGYR).

Belongs to the IPP transferase family. Monomer. It depends on Mg(2+) as a cofactor.

It carries out the reaction adenosine(37) in tRNA + dimethylallyl diphosphate = N(6)-dimethylallyladenosine(37) in tRNA + diphosphate. Its function is as follows. Catalyzes the transfer of a dimethylallyl group onto the adenine at position 37 in tRNAs that read codons beginning with uridine, leading to the formation of N6-(dimethylallyl)adenosine (i(6)A). This is tRNA dimethylallyltransferase from Haemophilus ducreyi (strain 35000HP / ATCC 700724).